Reading from the N-terminus, the 168-residue chain is Small ribosomal subunit protein uS9 (168 aa).

Residues Met1–Ala11 are compositionally biased toward low complexity. Positions Met1–Arg36 are disordered.

It belongs to the universal ribosomal protein uS9 family.

The polypeptide is Small ribosomal subunit protein uS9 (Pseudarthrobacter chlorophenolicus (strain ATCC 700700 / DSM 12829 / CIP 107037 / JCM 12360 / KCTC 9906 / NCIMB 13794 / A6) (Arthrobacter chlorophenolicus)).